The primary structure comprises 577 residues: General transcription factor IIF subunit 1 (577 aa).

Residues 1–36 (MSSASKSTPSAASGSSTSAAAAAAASVASGSASSSA) form a disordered region. Ser183, Ser246, Ser250, and Ser252 each carry phosphoserine. Residues 236–508 (KITDMDEWID…TSLPTSFSGG (273 aa)) are disordered. Positions 240 to 256 (MDEWIDSEDESDSEDEE) are enriched in acidic residues. The segment covering 257–271 (DKKKKEQEDSDDGKA) has biased composition (basic and acidic residues). Over residues 272 to 285 (KGKGKKGADKKKKK) the composition is skewed to basic residues. Positions 289 to 304 (DDEAFEESDDGDEEGR) are enriched in acidic residues. Over residues 319 to 341 (PEAKVDKDMKGVAEEDALRKLLT) the composition is skewed to basic and acidic residues. A Phosphothreonine modification is found at Thr341. 3 positions are modified to phosphoserine: Ser342, Ser352, and Ser355. A compositionally biased stretch (basic and acidic residues) spans 362 to 376 (GEKKKKDKGKDEVSK). A compositionally biased stretch (low complexity) spans 392-406 (SNGSGDSSTDFSSDS). A compositionally biased stretch (basic and acidic residues) spans 423 to 437 (VVKDKDKEKEKEKES). The segment covering 438-456 (AASSKVIASSSNANKSRSA) has biased composition (low complexity). Phosphoserine occurs at positions 453 and 455. The residue at position 457 (Thr457) is a Phosphothreonine. Polar residues-rich tracts occupy residues 471–489 (SLPS…TSTP) and 496–506 (EISTSLPTSFS). 2 positions are modified to phosphoserine: Ser482 and Ser484. Thr488 carries the phosphothreonine modification.

It belongs to the TFIIF alpha subunit family. In terms of assembly, heterodimer of an alpha and a beta subunit. In terms of processing, phosphorylated on Ser and other residues by TAF1 and casein kinase II-like kinases.

Its subcellular location is the nucleus. In terms of biological role, TFIIF is a general transcription initiation factor that binds to RNA polymerase II and helps to recruit it to the initiation complex in collaboration with TFIIB. It promotes transcription elongation. The sequence is that of General transcription factor IIF subunit 1 from Drosophila melanogaster (Fruit fly).